We begin with the raw amino-acid sequence, 187 residues long: Aminodeoxychorismate synthase component 2 (187 aa).

The Glutamine amidotransferase type-1 domain maps to 1 to 187; that stretch reads MILLIDNYDS…HQLLANFLHR (187 aa). Residues Cys-79, His-168, and Glu-170 contribute to the active site.

Monomer. Heterodimer consisting of two non-identical subunits: a glutamine amidotransferase subunit (PabA) and a aminodeoxychorismate synthase subunit (PabB).

The enzyme catalyses chorismate + L-glutamine = 4-amino-4-deoxychorismate + L-glutamate. It participates in cofactor biosynthesis; tetrahydrofolate biosynthesis; 4-aminobenzoate from chorismate: step 1/2. With respect to regulation, inhibited by 6-diazo-5-oxo-L-norleucine (DON). The inhibition is competitive with glutamine, but uncompetitive with chorismate. In terms of biological role, part of a heterodimeric complex that catalyzes the two-step biosynthesis of 4-amino-4-deoxychorismate (ADC), a precursor of p-aminobenzoate (PABA) and tetrahydrofolate. In the first step, a glutamine amidotransferase (PabA) generates ammonia as a substrate that, along with chorismate, is used in the second step, catalyzed by aminodeoxychorismate synthase (PabB) to produce ADC. PabA converts glutamine into glutamate only in the presence of stoichiometric amounts of PabB. The protein is Aminodeoxychorismate synthase component 2 of Escherichia coli (strain K12).